We begin with the raw amino-acid sequence, 359 residues long: Probably inactive receptor-like protein kinase At5g41680 (359 aa).

A Protein kinase domain is found at 59–357 (AASAEILGKG…KLIQDIPTNF (299 aa)). ATP is bound by residues 65–73 (LGKGAHVTT) and Lys-87.

Belongs to the protein kinase superfamily. Ser/Thr protein kinase family.

In Arabidopsis thaliana (Mouse-ear cress), this protein is Probably inactive receptor-like protein kinase At5g41680.